The following is a 51-amino-acid chain: UPF0391 membrane protein Psyc_0130 (51 aa).

Transmembrane regions (helical) follow at residues 6-26 and 28-47; these read IIFA…VAGL and ANFA…VAFV.

It belongs to the UPF0391 family.

The protein resides in the cell membrane. The polypeptide is UPF0391 membrane protein Psyc_0130 (Psychrobacter arcticus (strain DSM 17307 / VKM B-2377 / 273-4)).